The following is a 568-amino-acid chain: NADPH oxidase 3 (568 aa).

The Cytoplasmic portion of the chain corresponds to 1–13; that stretch reads MMGCWILNEGLST. Residues 14–34 traverse the membrane as a helical segment; sequence ILVLSWLGINFYLFIDTFYWY. At 35-51 the chain is on the extracellular side; sequence EEEESFHYTRVILGSTL. The helical transmembrane segment at 52-72 threads the bilayer; that stretch reads AWARASALCLNFNCMLILIPV. Residues 55–284 form the Ferric oxidoreductase domain; that stretch reads RASALCLNFN…VVLYACERII (230 aa). Residues 73 to 103 lie on the Cytoplasmic side of the membrane; it reads SRNLISFIRGTSICCRGPWRRQLDKNLRFHK. Residues 104–124 traverse the membrane as a helical segment; the sequence is LVAYGIAVNATIHIVAHFFNL. The Extracellular portion of the chain corresponds to 125-167; that stretch reads ERYHWSQSEEAQGLLAALSKLGNTPNESYLNPVRTFPTNTTTE. N-linked (GlcNAc...) asparagine glycosylation is present at N163. A helical membrane pass occupies residues 168 to 188; sequence LLRTIAGVTGLVISLALVLIM. The Cytoplasmic portion of the chain corresponds to 189–201; that stretch reads TSSTEFIRQASYE. The helical transmembrane segment at 202-222 threads the bilayer; sequence LFWYTHHVFIVFFLSLAIHGT. The Extracellular portion of the chain corresponds to 223 to 395; it reads GRIVRGQTQD…DGPFGTALTD (173 aa). The N-linked (GlcNAc...) asparagine glycan is linked to N238. The FAD-binding FR-type domain occupies 285–395; sequence RFWRFQQEVV…DGPFGTALTD (111 aa). Residues 396 to 416 traverse the membrane as a helical segment; sequence VFHYPVCVCVAAGIGVTPFAA. Residues 417–568 are Cytoplasmic-facing; sequence LLKSIWYKCS…VHFYYNKESF (152 aa).

Interacts with CYBA/p22phox. Heterodimerization with CYBA/p22phox is essential for its activity and cell membrane localization. It depends on heme as a cofactor. In terms of processing, N-glycosylated in a CYBA/p22phox-dependent manner.

It localises to the cell membrane. It carries out the reaction NADPH + 2 O2 = 2 superoxide + NADP(+) + H(+). Its activity is regulated as follows. Activated by the ototoxic drug cisplatin. Activated by NOXO1. Cooperatively activated by NCF1 and NCF2 or NOXA1 in a phorbol 12-myristate 13-acetate (PMA)-dependent manner. Inhibited by diphenyleneiodonium chloride. NADPH oxidase that catalyzes the generation of superoxide from molecular oxygen utilizing NADPH as an electron donor, upon formation of a complex with CYBA/p22phox. Plays a role in the biogenesis of otoconia/otolith, which are crystalline structures of the inner ear involved in the perception of gravity. This chain is NADPH oxidase 3 (NOX3), found in Homo sapiens (Human).